Here is a 305-residue protein sequence, read N- to C-terminus: MNTRDVGKVAVLLGGRSAEREISLRSGQAVLAALQRSRVNAHAFDPAGQPLENLLQQGFDRVFIALHGRYGEDGSVQGALELMELPYTGSGILASALAMDKWRTKMIWQAAGINTPDYVMLDASSRFRDVADRLGLPLIIKPAREGSTLGLNKVDNEQDFRSAYQAAAEYDSLVLAEQFIQGIELTAAILDDMPLPLVRIDVAEGLYDYQAKYFSESTRYTCPSGLSAALTTRIQEQALYAHRILGCTGWSRVDLILDENEQPFFLETNTSPGMTDHSLVPMAAKAAGISFDELVVQILELSCEH.

One can recognise an ATP-grasp domain in the interval 105-300 (KMIWQAAGIN…FDELVVQILE (196 aa)). Residue 131–186 (ADRLGLPLIIKPAREGSTLGLNKVDNEQDFRSAYQAAAEYDSLVLAEQFIQGIELT) coordinates ATP. Positions 254, 267, and 269 each coordinate Mg(2+).

This sequence belongs to the D-alanine--D-alanine ligase family. Requires Mg(2+) as cofactor. The cofactor is Mn(2+).

It localises to the cytoplasm. The enzyme catalyses 2 D-alanine + ATP = D-alanyl-D-alanine + ADP + phosphate + H(+). It participates in cell wall biogenesis; peptidoglycan biosynthesis. Cell wall formation. In Nitrosomonas europaea (strain ATCC 19718 / CIP 103999 / KCTC 2705 / NBRC 14298), this protein is D-alanine--D-alanine ligase.